Here is a 341-residue protein sequence, read N- to C-terminus: Tetraacyldisaccharide 4'-kinase (341 aa).

ATP is bound at residue T57–T64.

The protein belongs to the LpxK family.

It catalyses the reaction a lipid A disaccharide + ATP = a lipid IVA + ADP + H(+). It participates in glycolipid biosynthesis; lipid IV(A) biosynthesis; lipid IV(A) from (3R)-3-hydroxytetradecanoyl-[acyl-carrier-protein] and UDP-N-acetyl-alpha-D-glucosamine: step 6/6. Transfers the gamma-phosphate of ATP to the 4'-position of a tetraacyldisaccharide 1-phosphate intermediate (termed DS-1-P) to form tetraacyldisaccharide 1,4'-bis-phosphate (lipid IVA). The sequence is that of Tetraacyldisaccharide 4'-kinase from Maricaulis maris (strain MCS10) (Caulobacter maris).